Consider the following 338-residue polypeptide: GDSL esterase/lipase At5g63170 (338 aa).

An N-terminal signal peptide occupies residues 1–23 (MNSLVIQTTIVLVSVISVSIVHA). The active-site Nucleophile is Ser-35. Catalysis depends on residues Asp-313 and His-316.

The protein belongs to the 'GDSL' lipolytic enzyme family.

Its subcellular location is the secreted. The protein is GDSL esterase/lipase At5g63170 of Arabidopsis thaliana (Mouse-ear cress).